A 45-amino-acid chain; its full sequence is Enterotoxin (45 aa).

As to quaternary structure, one of 3 components (of 35, 45 and 105 kDa) of the enterotoxin.

Functionally, one of 3 components required for cytotoxicity (tested in African green monkey Vero cells); the complex is not hemolytic. In Bacillus cereus, this protein is Enterotoxin.